A 284-amino-acid chain; its full sequence is Deoxyribonuclease-1 (284 aa).

A signal peptide spans 1–22 (MRYTGLMGTLLTLVNLLQLAGT). Residue N40 is glycosylated (N-linked (GlcNAc...) asparagine). E100 is a catalytic residue. A disulfide bridge connects residues C123 and C126. N-linked (GlcNAc...) asparagine glycosylation occurs at N128. The active site involves H156. The cysteines at positions 195 and 231 are disulfide-linked.

This sequence belongs to the DNase I family. Ca(2+) serves as cofactor. Requires Mg(2+) as cofactor. Post-translationally, N-glycosylated. As to expression, highly expressed in the parotid and submandibular gland as well as in the kidney and duodenum (at protein level). Expressed at intermediate level in the ileum, mesenterial lymph nodes, liver, ventral prostate, epididymis, ovary and stomach (at protein level). Expressed at low level in the sublingual, preputial, coagulation and pituitary gland (at protein level). Also present in the lachrymal and thyroid glands, striated muscle, intestine, the urinary bladder and the eye.

The protein localises to the secreted. The protein resides in the zymogen granule. It localises to the nucleus envelope. It catalyses the reaction Endonucleolytic cleavage to 5'-phosphodinucleotide and 5'-phosphooligonucleotide end-products.. In terms of biological role, serum endocuclease secreted into body fluids by a wide variety of exocrine and endocrine organs. Expressed by non-hematopoietic tissues and preferentially cleaves protein-free DNA. Among other functions, seems to be involved in cell death by apoptosis. Binds specifically to G-actin and blocks actin polymerization. Together with DNASE1L3, plays a key role in degrading neutrophil extracellular traps (NETs). NETs are mainly composed of DNA fibers and are released by neutrophils to bind pathogens during inflammation. Degradation of intravascular NETs by DNASE1 and DNASE1L3 is required to prevent formation of clots that obstruct blood vessels and cause organ damage following inflammation. This Mus musculus (Mouse) protein is Deoxyribonuclease-1.